Consider the following 390-residue polypeptide: 2-oxoisovalerate dehydrogenase subunit beta, mitochondrial (390 aa).

The transit peptide at 1 to 48 directs the protein to the mitochondrion; that stretch reads MAAVAARAGGLLRLGAAGAERRRRGLRCAALVQGFLQPAVDDASQKRR. Thiamine diphosphate is bound at residue Tyr150. K(+) contacts are provided by Gly176, Leu178, Thr179, Cys226, and Asp229. Lys230 carries the post-translational modification N6-acetyllysine. Asn231 serves as a coordination point for K(+). Lys239 is modified (N6-acetyllysine).

In terms of assembly, heterotetramer of 2 alpha/BCKDHA and 2 beta chains/BCKDHB that forms the branched-chain alpha-keto acid decarboxylase (E1) component of the BCKD complex. The branched-chain alpha-ketoacid dehydrogenase is a large complex composed of three major building blocks E1, E2 and E3. It is organized around E2, a 24-meric cubic core composed of DBT, to which are associated 6 to 12 copies of E1, and approximately 6 copies of the dehydrogenase E3, a DLD dimer. Requires thiamine diphosphate as cofactor.

It localises to the mitochondrion matrix. It carries out the reaction N(6)-[(R)-lipoyl]-L-lysyl-[protein] + 3-methyl-2-oxobutanoate + H(+) = N(6)-[(R)-S(8)-2-methylpropanoyldihydrolipoyl]-L-lysyl-[protein] + CO2. In terms of biological role, together with BCKDHA forms the heterotetrameric E1 subunit of the mitochondrial branched-chain alpha-ketoacid dehydrogenase (BCKD) complex. The BCKD complex catalyzes the multi-step oxidative decarboxylation of alpha-ketoacids derived from the branched-chain amino-acids valine, leucine and isoleucine producing CO2 and acyl-CoA which is subsequently utilized to produce energy. The E1 subunit catalyzes the first step with the decarboxylation of the alpha-ketoacid forming an enzyme-product intermediate. A reductive acylation mediated by the lipoylamide cofactor of E2 extracts the acyl group from the E1 active site for the next step of the reaction. This Rattus norvegicus (Rat) protein is 2-oxoisovalerate dehydrogenase subunit beta, mitochondrial.